Here is a 353-residue protein sequence, read N- to C-terminus: MIETDKLQAPRVISAQTADRQEDVVERALRPKRLAEYVGQAKIREQLEIFIQAAKNRHEALDHVLLFGPPGLGKTTLAHIVAAEMGVNLRQTSGPVLERAGDLAALLTNLEPHDVLFIDEIHRLSPVVEEILYPALEDFQIDIMIGEGPAARSVKLDLPPFTLVGATTRAGMLTNPLRDRFGIVARLEFYTPHELAYIVGRSAGLLDVAIDDAGAVEIARRARGTPRIANRLLRRVRDYAQVKADGDITAPVADAALLMLDVDHLGLDLMDRKLLGAMLEKFGGGPVGLDNLAAAIGESSDTIEDVLEPYLIQQGYLQRTPRGRIASASIWQHFGLAFPRRAGDESAELFSAP.

The large ATPase domain (RuvB-L) stretch occupies residues 4-190; that stretch reads TDKLQAPRVI…FGIVARLEFY (187 aa). ATP-binding positions include L29, R30, G71, K74, T75, T76, 137 to 139, R180, Y190, and R227; that span reads EDF. Residue T75 coordinates Mg(2+). Positions 191–261 are small ATPAse domain (RuvB-S); the sequence is TPHELAYIVG…VADAALLMLD (71 aa). Residues 264–353 form a head domain (RuvB-H) region; the sequence is HLGLDLMDRK…DESAELFSAP (90 aa). DNA contacts are provided by R319 and R324.

It belongs to the RuvB family. As to quaternary structure, homohexamer. Forms an RuvA(8)-RuvB(12)-Holliday junction (HJ) complex. HJ DNA is sandwiched between 2 RuvA tetramers; dsDNA enters through RuvA and exits via RuvB. An RuvB hexamer assembles on each DNA strand where it exits the tetramer. Each RuvB hexamer is contacted by two RuvA subunits (via domain III) on 2 adjacent RuvB subunits; this complex drives branch migration. In the full resolvosome a probable DNA-RuvA(4)-RuvB(12)-RuvC(2) complex forms which resolves the HJ.

It is found in the cytoplasm. The enzyme catalyses ATP + H2O = ADP + phosphate + H(+). Its function is as follows. The RuvA-RuvB-RuvC complex processes Holliday junction (HJ) DNA during genetic recombination and DNA repair, while the RuvA-RuvB complex plays an important role in the rescue of blocked DNA replication forks via replication fork reversal (RFR). RuvA specifically binds to HJ cruciform DNA, conferring on it an open structure. The RuvB hexamer acts as an ATP-dependent pump, pulling dsDNA into and through the RuvAB complex. RuvB forms 2 homohexamers on either side of HJ DNA bound by 1 or 2 RuvA tetramers; 4 subunits per hexamer contact DNA at a time. Coordinated motions by a converter formed by DNA-disengaged RuvB subunits stimulates ATP hydrolysis and nucleotide exchange. Immobilization of the converter enables RuvB to convert the ATP-contained energy into a lever motion, pulling 2 nucleotides of DNA out of the RuvA tetramer per ATP hydrolyzed, thus driving DNA branch migration. The RuvB motors rotate together with the DNA substrate, which together with the progressing nucleotide cycle form the mechanistic basis for DNA recombination by continuous HJ branch migration. Branch migration allows RuvC to scan DNA until it finds its consensus sequence, where it cleaves and resolves cruciform DNA. The protein is Holliday junction branch migration complex subunit RuvB of Aromatoleum aromaticum (strain DSM 19018 / LMG 30748 / EbN1) (Azoarcus sp. (strain EbN1)).